Consider the following 140-residue polypeptide: Transcription antitermination protein NusB (140 aa).

It belongs to the NusB family.

Involved in transcription antitermination. Required for transcription of ribosomal RNA (rRNA) genes. Binds specifically to the boxA antiterminator sequence of the ribosomal RNA (rrn) operons. This is Transcription antitermination protein NusB from Alteromonas mediterranea (strain DSM 17117 / CIP 110805 / LMG 28347 / Deep ecotype).